The primary structure comprises 88 residues: Putative defensin-like protein 228 (88 aa).

A signal peptide spans 1-27; it reads MMKSAILLMVSCVFMFLVVSYIQDVEG. Disulfide bonds link cysteine 32-cysteine 88, cysteine 42-cysteine 66, cysteine 50-cysteine 82, and cysteine 64-cysteine 84.

Belongs to the DEFL family.

It is found in the secreted. The sequence is that of Putative defensin-like protein 228 (SCRL3) from Arabidopsis thaliana (Mouse-ear cress).